The primary structure comprises 112 residues: Ribosome-binding factor A (112 aa).

The protein belongs to the RbfA family. As to quaternary structure, monomer. Binds 30S ribosomal subunits, but not 50S ribosomal subunits or 70S ribosomes.

It is found in the cytoplasm. Functionally, one of several proteins that assist in the late maturation steps of the functional core of the 30S ribosomal subunit. Associates with free 30S ribosomal subunits (but not with 30S subunits that are part of 70S ribosomes or polysomes). Required for efficient processing of 16S rRNA. May interact with the 5'-terminal helix region of 16S rRNA. In Ruthia magnifica subsp. Calyptogena magnifica, this protein is Ribosome-binding factor A.